A 265-amino-acid chain; its full sequence is MEVLKRENPLIHMITNYVTVNDLAQVTINYGGLPLMATHHDELKEITKMANGLLVNIGTLEPYQMESSMISMKIAKEKGIPSVLDPVGVQASKLRKDFAKKLILEGEPSLIKGNLAEIKTLIGETSNSIGIDSFDDSLSENTKNKIKEYARERNLIVVVSGVVDFITNGEESASVKNGTYKMSKITGTGCMLGALLTLALSFYDHKDLRFKEVVKAVSTWGICGELAEERLREKEGLMTFKHNLLDELSIINDETIKEREKVIYD.

Met-36 contacts substrate. ATP contacts are provided by Lys-112 and Ser-160. Residue Gly-187 participates in substrate binding.

It belongs to the Thz kinase family. Requires Mg(2+) as cofactor.

It carries out the reaction 5-(2-hydroxyethyl)-4-methylthiazole + ATP = 4-methyl-5-(2-phosphooxyethyl)-thiazole + ADP + H(+). It participates in cofactor biosynthesis; thiamine diphosphate biosynthesis; 4-methyl-5-(2-phosphoethyl)-thiazole from 5-(2-hydroxyethyl)-4-methylthiazole: step 1/1. Functionally, catalyzes the phosphorylation of the hydroxyl group of 4-methyl-5-beta-hydroxyethylthiazole (THZ). In Clostridium perfringens (strain ATCC 13124 / DSM 756 / JCM 1290 / NCIMB 6125 / NCTC 8237 / Type A), this protein is Hydroxyethylthiazole kinase.